Consider the following 264-residue polypeptide: Thymidylate synthase (264 aa).

Residues Arg-21 and 126–127 contribute to the dUMP site; that span reads RR. Residue Cys-146 is the Nucleophile of the active site. DUMP-binding positions include 166–169, Asn-177, and 207–209; these read RSAD and HLY. Asp-169 serves as a coordination point for (6R)-5,10-methylene-5,6,7,8-tetrahydrofolate. Ala-263 is a binding site for (6R)-5,10-methylene-5,6,7,8-tetrahydrofolate.

Belongs to the thymidylate synthase family. Bacterial-type ThyA subfamily. Homodimer.

The protein resides in the cytoplasm. It carries out the reaction dUMP + (6R)-5,10-methylene-5,6,7,8-tetrahydrofolate = 7,8-dihydrofolate + dTMP. The protein operates within pyrimidine metabolism; dTTP biosynthesis. Catalyzes the reductive methylation of 2'-deoxyuridine-5'-monophosphate (dUMP) to 2'-deoxythymidine-5'-monophosphate (dTMP) while utilizing 5,10-methylenetetrahydrofolate (mTHF) as the methyl donor and reductant in the reaction, yielding dihydrofolate (DHF) as a by-product. This enzymatic reaction provides an intracellular de novo source of dTMP, an essential precursor for DNA biosynthesis. The protein is Thymidylate synthase of Rhodopseudomonas palustris (strain HaA2).